Consider the following 469-residue polypeptide: 3-isopropylmalate dehydratase large subunit (469 aa).

The [4Fe-4S] cluster site is built by cysteine 347, cysteine 407, and cysteine 410.

Belongs to the aconitase/IPM isomerase family. LeuC type 1 subfamily. In terms of assembly, heterodimer of LeuC and LeuD. The cofactor is [4Fe-4S] cluster.

The catalysed reaction is (2R,3S)-3-isopropylmalate = (2S)-2-isopropylmalate. Its pathway is amino-acid biosynthesis; L-leucine biosynthesis; L-leucine from 3-methyl-2-oxobutanoate: step 2/4. In terms of biological role, catalyzes the isomerization between 2-isopropylmalate and 3-isopropylmalate, via the formation of 2-isopropylmaleate. This is 3-isopropylmalate dehydratase large subunit from Prochlorococcus marinus (strain NATL2A).